The following is an 879-amino-acid chain: Exocyst complex component 1 (879 aa).

The tract at residues 29–94 (SQYSESEYDP…ATSLGNNDGD (66 aa)) is disordered. A compositionally biased stretch (basic and acidic residues) spans 40–52 (ETTHSESDSENHH). Residues 64–76 (FLSQSNDNVSNGP) show a composition bias toward polar residues. The segment covering 77-91 (SNNTLSSSATSLGNN) has biased composition (low complexity). 2 coiled-coil regions span residues 165 to 187 (YNKQ…NKME) and 226 to 248 (KGLK…KLKS). Disordered regions lie at residues 371–413 (QNDF…GKDG) and 455–557 (GQRN…PDAP). Over residues 373–409 (DFFSSSSSSKKSIDSLNNNTSTSTPSKNSSSSSSSSS) the composition is skewed to low complexity. Over residues 480 to 500 (KKSSKKDKKDKKDKKDKKDKK) the composition is skewed to basic residues. A compositionally biased stretch (polar residues) spans 519-532 (DSNSPKSPNNAVNG). Over residues 541 to 551 (SPPPPPPPPPK) the composition is skewed to pro residues.

This sequence belongs to the SEC3 family. In terms of assembly, the exocyst complex is composed of sec3/exoc1, sec5/exoc2, sec6/exoc3, sec8/exoc4, sec10/exoc5, sec15/exoc6, exo70/exoc7 and exo84/exoc8.

The protein localises to the midbody. Its subcellular location is the midbody ring. Its function is as follows. Component of the exocyst complex involved in the docking of exocytic vesicles with fusion sites on the plasma membrane. The polypeptide is Exocyst complex component 1 (exoc1) (Dictyostelium discoideum (Social amoeba)).